Consider the following 301-residue polypeptide: MENLLSVKDLSKQQILDLLALAKAVKANPAEYSQALAGKSIVTIYEKQSLRTRVTFDIGIHKLGGHAVYLDAQNGAIGERETVKDFAANISRWADAIVARVMSHKTLEGLVEHGSVPVVNSLCDLYHPCQALADFLTISEHYEDVSKVKLAYIGEGNNVTHSLMLTGAILGAEVTAVCPRGSSPDAQIVKQAMALAEISGGKINVTDNLDDIVDYDVIYGDTWVSMGDDTPLAQVKEKYMPYQINKELLIRTGIKHVLHCQPAHRELEITSEVMDGEHSLIFDQAENRMHAQNAVLLTLLK.

Carbamoyl phosphate is bound by residues R100 and 127 to 130 (HPCQ). L-ornithine contacts are provided by residues N158, D221, and 225-226 (SM). Residues C260 and R288 each contribute to the carbamoyl phosphate site.

The protein belongs to the aspartate/ornithine carbamoyltransferase superfamily. OTCase family. In terms of assembly, homododecamer.

Its subcellular location is the cytoplasm. The enzyme catalyses carbamoyl phosphate + L-ornithine = L-citrulline + phosphate + H(+). Its pathway is amino-acid biosynthesis; L-arginine biosynthesis; L-arginine from L-ornithine and carbamoyl phosphate: step 1/3. Functionally, reversibly catalyzes the transfer of the carbamoyl group from carbamoyl phosphate (CP) to the N(epsilon) atom of ornithine (ORN) to produce L-citrulline. This Moritella profunda protein is Ornithine carbamoyltransferase (argF).